The chain runs to 507 residues: Alpha-amylase 2 (507 aa).

The N-terminal stretch at 1–20 (MKFATILSTTALALSSLVAS) is a signal peptide. Cysteine 62 and cysteine 70 form a disulfide bridge. Residue tryptophan 115 coordinates substrate. Asparagine 153 contributes to the Ca(2+) binding site. Residue histidine 154 participates in substrate binding. The cysteines at positions 182 and 196 are disulfide-linked. Residues glutamate 194 and aspartate 207 each contribute to the Ca(2+) site. N-linked (GlcNAc...) asparagine glycosylation occurs at asparagine 229. Arginine 236 contacts substrate. Residues aspartate 238, histidine 242, and glutamate 262 each coordinate Ca(2+). Aspartate 238 acts as the Nucleophile in catalysis. 241-242 (KH) is a binding site for substrate. Residue glutamate 262 is the Proton donor of the active site. Residue glycine 266 participates in substrate binding. Residues cysteine 272 and cysteine 315 are joined by a disulfide bond. Residues aspartate 329 and arginine 376 each coordinate substrate. Cysteine 470 and cysteine 505 are oxidised to a cystine.

It belongs to the glycosyl hydrolase 13 family. Ca(2+) is required as a cofactor.

It catalyses the reaction Endohydrolysis of (1-&gt;4)-alpha-D-glucosidic linkages in polysaccharides containing three or more (1-&gt;4)-alpha-linked D-glucose units.. The polypeptide is Alpha-amylase 2 (SWA2) (Schwanniomyces occidentalis (Yeast)).